Reading from the N-terminus, the 803-residue chain is Volume-regulated anion channel subunit LRRC8C (803 aa).

Residues 1–22 (MIPVTEFRQFSEQQPAFRVLKP) are Cytoplasmic-facing. A helical membrane pass occupies residues 23 to 48 (WWDVFTDYLSVAMLMIGVFGCTLQVM). The Extracellular portion of the chain corresponds to 49–124 (QDKIICLPKR…CYERALHWYA (76 aa)). Cystine bridges form between C54/C308 and C115/C293. Residues 125 to 144 (KYFPYLVLIHTLVFMLCSNF) traverse the membrane as a helical segment. Residues 145–262 (WFKFPGSSSK…EEGDILYAMY (118 aa)) are Cytoplasmic-facing. The tract at residues 177 to 206 (EVSGEDSEEKDNRKNNMNRSGTIQSGPEGN) is disordered. Over residues 191–206 (NNMNRSGTIQSGPEGN) the composition is skewed to polar residues. Residues S212 and S215 each carry the phosphoserine modification. The chain crosses the membrane as a helical span at residues 263–284 (VRQTVLKVIKFLIIIAYNSALV). Over 285–314 (SKVQFTVDCNVDIQDMTGYKNFSCNHTMAH) the chain is Extracellular. Residues 315–339 (LFSKLSFCYLCFVSIYGLTCLYTLY) traverse the membrane as a helical segment. At 340–803 (WLFYRSLREY…SDVREQMKAD (464 aa)) the chain is on the cytoplasmic side. 17 LRR repeats span residues 409–420 (WTPDKLRQKLQT), 421–443 (NAHN…VFEI), 446–466 (LQSL…IAQL), 467–488 (DNLQ…ALSF), 490–513 (KENL…MYGL), 515–537 (NLEE…TLES), 541–563 (LKSL…VVDV), 566–586 (HLQK…NNLK), 588–611 (MTNL…VFSL), 613–635 (SLQE…SFQH), 637–659 (RKLT…IKKL), 660–682 (TSLE…LFLC), 684–705 (KIRY…IGVL), 706–728 (QSLQ…LYFC), 730–751 (KLKT…IGNL), 752–774 (LFLS…LGDC), and 776–799 (ALKR…VREQ).

It belongs to the LRRC8 family. In terms of assembly, heterohexamer; oligomerizes with other LRRC8 proteins (LRRC8A, LRRC8B, LRRC8D and/or LRRC8E) to form a heterohexamer. Homoheptamer; inactive, likely because it is not targeted to the plasma membrane in the absence of LRRC8A. In vivo, the subunit composition may depend primarily on expression levels, and heterooligomeric channels containing various proportions of the different LRRC8 proteins may coexist. As to expression, expressed at very low levels in adipose tissue.

It is found in the cell membrane. It localises to the endoplasmic reticulum membrane. The enzyme catalyses chloride(in) = chloride(out). It catalyses the reaction iodide(out) = iodide(in). It carries out the reaction taurine(out) = taurine(in). The catalysed reaction is 2',3'-cGAMP(out) = 2',3'-cGAMP(in). Non-essential component of the volume-regulated anion channel (VRAC, also named VSOAC channel), an anion channel required to maintain a constant cell volume in response to extracellular or intracellular osmotic changes. The VRAC channel conducts iodide better than chloride and can also conduct organic osmolytes like taurine. Plays a redundant role in the efflux of amino acids, such as aspartate and glutamate, in response to osmotic stress. The VRAC channel also mediates transport of immunoreactive cyclic dinucleotide GMP-AMP (2'-3'-cGAMP), an immune messenger produced in response to DNA virus in the cytosol. Channel activity requires LRRC8A plus at least one other family member (LRRC8B, LRRC8C, LRRC8D or LRRC8E); channel characteristics depend on the precise subunit composition. May play a role in adipogenesis. The sequence is that of Volume-regulated anion channel subunit LRRC8C from Mus musculus (Mouse).